Here is a 107-residue protein sequence, read N- to C-terminus: MSAQDYYGNSASKQSYSRPSAPPPGYETASRGYAPSQSQQNYYPPQQQQQQYQQQPQYYQQQQPQYYQQHPQQPIYVQQQPASSGNEDCLAGCLAGLCLCCTLDMLF.

Residues 1–18 show a composition bias toward polar residues; that stretch reads MSAQDYYGNSASKQSYSR. The segment at 1-86 is disordered; the sequence is MSAQDYYGNS…VQQQPASSGN (86 aa). N-acetylserine is present on Ser2. A Glycyl lysine isopeptide (Lys-Gly) (interchain with G-Cter in ubiquitin) cross-link involves residue Lys13. Residues 35-81 are compositionally biased toward low complexity; it reads PSQSQQNYYPPQQQQQQYQQQPQYYQQQQPQYYQQHPQQPIYVQQQP.

This sequence belongs to the CYSTM1 family.

The protein localises to the cell membrane. The polypeptide is Lipid-anchored protein YDL012C (Saccharomyces cerevisiae (strain ATCC 204508 / S288c) (Baker's yeast)).